The chain runs to 408 residues: Sporulation integral membrane protein YlbJ (408 aa).

Helical transmembrane passes span 6–26 (INTL…ISHP), 43–63 (VVFP…GFGI), 81–101 (VPGV…PAGA), 131–151 (LFIF…GILL), 214–234 (VTSS…FSVF), 294–314 (IIVS…VAGI), 324–344 (PFFI…MLLW), and 377–397 (LLVQ…IIIF).

The protein resides in the cell membrane. In terms of biological role, required for spore cortex formation. In Bacillus subtilis (strain 168), this protein is Sporulation integral membrane protein YlbJ (ylbJ).